The sequence spans 335 residues: Luciferase-like monooxygenase (335 aa).

The protein to bacterial alkanal monooxygenase alpha and beta chains.

The sequence is that of Luciferase-like monooxygenase (yhbW) from Escherichia coli O6:H1 (strain CFT073 / ATCC 700928 / UPEC).